A 318-amino-acid polypeptide reads, in one-letter code: Ribose-phosphate pyrophosphokinase (318 aa).

Residues 46–48 (DGE) and 105–106 (RQ) contribute to the ATP site. The Mg(2+) site is built by His-139 and Asp-178. Lys-201 is a catalytic residue. D-ribose 5-phosphate contacts are provided by residues Arg-203, Asp-227, and 231-235 (DTAGT).

It belongs to the ribose-phosphate pyrophosphokinase family. Class I subfamily. As to quaternary structure, homohexamer. Requires Mg(2+) as cofactor.

It is found in the cytoplasm. It catalyses the reaction D-ribose 5-phosphate + ATP = 5-phospho-alpha-D-ribose 1-diphosphate + AMP + H(+). It functions in the pathway metabolic intermediate biosynthesis; 5-phospho-alpha-D-ribose 1-diphosphate biosynthesis; 5-phospho-alpha-D-ribose 1-diphosphate from D-ribose 5-phosphate (route I): step 1/1. In terms of biological role, involved in the biosynthesis of the central metabolite phospho-alpha-D-ribosyl-1-pyrophosphate (PRPP) via the transfer of pyrophosphoryl group from ATP to 1-hydroxyl of ribose-5-phosphate (Rib-5-P). The protein is Ribose-phosphate pyrophosphokinase of Helicobacter pylori (strain ATCC 700392 / 26695) (Campylobacter pylori).